A 515-amino-acid polypeptide reads, in one-letter code: Nuclear hormone receptor family member nhr-62 (515 aa).

The segment at residues 95–170 (NLVCVVCGDQ…AGMNPRAVQS (76 aa)) is a DNA-binding region (nuclear receptor). NR C4-type zinc fingers lie at residues 98 to 118 (CVVCGDQAFGKHYGVNACNGC) and 134 to 153 (CRFEGRCAIAKEHRNVCRAC). The segment at 169–195 (QSERVEREQNGSPNQIEEDDYKDLSSP) is disordered. Positions 225 to 509 (EMAKLSEQIV…YLCHEVQFIQ (285 aa)) constitute an NR LBD domain. The AF-2 stretch occupies residues 498–509 (SEYLCHEVQFIQ).

The protein belongs to the nuclear hormone receptor family. As to expression, widely expressed at a low level in many tissues including the pharynx, sensory neurons, intestine, spermatheca, hypodermis, and excretory cell.

The protein resides in the nucleus. Its function is as follows. Orphan nuclear hormone receptor. Required for metabolic and physiologic responses associated with dietary-restriction-induced longevity. Modulates triglyceride and lipid metabolism and autophagy, associated with dietary-restriction, probably acting via regulation of transcription of target genes. This is Nuclear hormone receptor family member nhr-62 (nhr-62) from Caenorhabditis elegans.